The following is a 225-amino-acid chain: Thymidylate kinase (225 aa).

An ATP-binding site is contributed by 10-17 (GVEGGGKT).

The protein belongs to the thymidylate kinase family.

It carries out the reaction dTMP + ATP = dTDP + ADP. Phosphorylation of dTMP to form dTDP in both de novo and salvage pathways of dTTP synthesis. In Trichodesmium erythraeum (strain IMS101), this protein is Thymidylate kinase.